A 210-amino-acid chain; its full sequence is DNA-directed RNA polymerase subunit 5-like protein 1 (210 aa).

Belongs to the archaeal Rpo5/eukaryotic RPB5 RNA polymerase subunit family.

Its subcellular location is the nucleus. In Arabidopsis thaliana (Mouse-ear cress), this protein is DNA-directed RNA polymerase subunit 5-like protein 1 (NRPB5L1).